The sequence spans 408 residues: 2,3-bisphosphoglycerate-independent phosphoglycerate mutase 1 (408 aa).

It belongs to the BPG-independent phosphoglycerate mutase family. A-PGAM subfamily. Monomer. Mn(2+) is required as a cofactor.

The enzyme catalyses (2R)-2-phosphoglycerate = (2R)-3-phosphoglycerate. The protein operates within carbohydrate degradation; glycolysis; pyruvate from D-glyceraldehyde 3-phosphate: step 3/5. Catalyzes the interconversion of 2-phosphoglycerate and 3-phosphoglycerate. This is 2,3-bisphosphoglycerate-independent phosphoglycerate mutase 1 (apgM1) from Archaeoglobus fulgidus (strain ATCC 49558 / DSM 4304 / JCM 9628 / NBRC 100126 / VC-16).